Here is a 397-residue protein sequence, read N- to C-terminus: Alanine racemase, biosynthetic (397 aa).

Catalysis depends on lysine 42, which acts as the Proton acceptor; specific for D-alanine. At lysine 42 the chain carries N6-(pyridoxal phosphate)lysine. Arginine 136 is a substrate binding site. The active-site Proton acceptor; specific for L-alanine is the tyrosine 257. Methionine 305 serves as a coordination point for substrate. Residues 373-397 are disordered; that stretch reads ANRPTEAMSNPSRAKSRPMDKQALI.

Belongs to the alanine racemase family. It depends on pyridoxal 5'-phosphate as a cofactor.

The catalysed reaction is L-alanine = D-alanine. The protein operates within amino-acid biosynthesis; D-alanine biosynthesis; D-alanine from L-alanine: step 1/1. It functions in the pathway cell wall biogenesis; peptidoglycan biosynthesis. In terms of biological role, catalyzes the interconversion of L-alanine and D-alanine. Provides the D-alanine required for cell wall biosynthesis. This is Alanine racemase, biosynthetic (alr) from Mesorhizobium japonicum (strain LMG 29417 / CECT 9101 / MAFF 303099) (Mesorhizobium loti (strain MAFF 303099)).